Reading from the N-terminus, the 103-residue chain is MNSSLNANSYFFRKPPMLTYMVRFLYCYPSPFPIAPAVTDLPECRGDLSLSLFITSFTSTKERTILYAKSRLKTHIPVNLCDRYHYIPKAPLYQCRMPCLYSI.

This is an uncharacterized protein from Saccharomyces cerevisiae (strain ATCC 204508 / S288c) (Baker's yeast).